A 142-amino-acid chain; its full sequence is MDVKKDENSILENMKQEINHSLKEEAQEEEEILKKRISSHPLYGLLLHSHLNCLKVCSGDFDSPEIMNTADDLALSKLSLHPDSSSEATSSELDQFMVLFFFSPCQNIFTQQKTTFHVLLFFPLQINLTFKYSKFILPRKKQ.

A coiled-coil region spans residues 4–36 (KKDENSILENMKQEINHSLKEEAQEEEEILKKR).

Interacts with KNAT1, KNAT3, KNAT4, BEL1, BLH2, BLH4 and BLH9, but not with BLH8 or the KNATM-A and KNATM-C isoforms. Isoforms KNATM-A and KNATM-C: no interactions with KNATM-B, KNOXX or BELL proteins. As to expression, detected in inflorescences, seedlings, leaves, hydathodes, stems, roots, embryo and siliques. Expressed in a polar pattern in organ primordia and at the boundary of mature organs. Detected in the lateral domains of flower meristems, but not in the inflorescence meristem or the vegetative shoot apical meristem.

It is found in the cytoplasm. It localises to the nucleus. In terms of biological role, transcriptional regulator involved in leaf proximal/distal patterning. May act by sequestering BELL transcription factors. The protein is Protein KNATM of Arabidopsis thaliana (Mouse-ear cress).